Here is a 656-residue protein sequence, read N- to C-terminus: Pyoverdine export ATP-binding/permease protein PvdT (656 aa).

Residues 6 to 245 (IDLRGIRKSY…SANPAALQAV (240 aa)) form the ABC transporter domain. 43–50 (GASGSGKS) is a binding site for ATP. 4 helical membrane passes run 284–304 (ALTL…LAVG), 538–558 (IAAI…LMTV), 589–609 (LSVV…AALL), and 619–639 (LSAV…FGFM).

This sequence belongs to the ABC transporter superfamily. Macrolide exporter (TC 3.A.1.122) family. Part of the tripartite efflux system PvdRT-OpmQ, which is composed of an inner membrane component with both ATPase and permease domains, PvdT, a periplasmic membrane fusion protein, PvdR, and an outer membrane component, OpmQ.

The protein resides in the cell inner membrane. Its function is as follows. Part of the tripartite efflux system PvdRT-OpmQ required for the secretion into the extracellular milieu of the siderophore pyoverdine (PVD), which is involved in iron acquisition. This subunit binds PVD and drives its secretion by hydrolyzing ATP. The system is responsible for export of newly synthesized PVD after the final steps of biosynthesis have taken place in the periplasm. It is also responsible for recycling of PVD after internalization of ferri-PVD into the periplasm by the outer-membrane receptor FpvA and release of iron from PVD, thus making PVD available for new cycles of iron uptake. The polypeptide is Pyoverdine export ATP-binding/permease protein PvdT (Pseudomonas syringae pv. tomato (strain ATCC BAA-871 / DC3000)).